The primary structure comprises 268 residues: Tetraspanin-5 (268 aa).

Residues 1-17 (MSGKHYKGPEVSCCIKY) lie on the Cytoplasmic side of the membrane. The helical transmembrane segment at 18–38 (FIFGFNVIFWFLGIAFLGIGL) threads the bilayer. Over 39-61 (WAWNEKGVLSNISSITDLGGFDP) the chain is Extracellular. N-linked (GlcNAc...) asparagine glycosylation is present at Asn49. The helical transmembrane segment at 62 to 82 (VWLFLVVGGVMFILGFAGCIG) threads the bilayer. Over 83–92 (ALRENTFLLK) the chain is Cytoplasmic. Residues 93 to 113 (FFSVFLGIIFFLELTAGVLAF) traverse the membrane as a helical segment. At 114–232 (VFKDWIKDQL…PQFEKWLQDN (119 aa)) the chain is on the extracellular side. Disulfide bonds link Cys153-Cys221, Cys154-Cys186, Cys170-Cys180, and Cys187-Cys200. N-linked (GlcNAc...) asparagine glycosylation is found at Asn169 and Asn174. A glycan (N-linked (GlcNAc...) asparagine) is linked at Asn232. A helical transmembrane segment spans residues 233 to 253 (LTIVAGIFIGIALLQIFGICL). Residues 254-268 (AQNLVSDIEAVRASW) are Cytoplasmic-facing.

This sequence belongs to the tetraspanin (TM4SF) family. As to quaternary structure, interacts with ADAM10; the interaction influences ADAM10 substrate specificity, endocytosis and turnover. Palmitoylated.

The protein resides in the cell membrane. Functionally, part of TspanC8 subgroup, composed of 6 members that interact with the transmembrane metalloprotease ADAM10. This interaction is required for ADAM10 exit from the endoplasmic reticulum and for enzymatic maturation and trafficking to the cell surface as well as substrate specificity. Different TspanC8/ADAM10 complexes have distinct substrates. Promotes ADAM10-mediated cleavage of CD44. Seems to regulate VE-cadherin expression in endothelial cells probably through interaction with ADAM10, promoting leukocyte transmigration. The sequence is that of Tetraspanin-5 (TSPAN5) from Bos taurus (Bovine).